Consider the following 236-residue polypeptide: Leucyl/phenylalanyl-tRNA--protein transferase (236 aa).

Belongs to the L/F-transferase family.

Its subcellular location is the cytoplasm. It carries out the reaction N-terminal L-lysyl-[protein] + L-leucyl-tRNA(Leu) = N-terminal L-leucyl-L-lysyl-[protein] + tRNA(Leu) + H(+). The catalysed reaction is N-terminal L-arginyl-[protein] + L-leucyl-tRNA(Leu) = N-terminal L-leucyl-L-arginyl-[protein] + tRNA(Leu) + H(+). It catalyses the reaction L-phenylalanyl-tRNA(Phe) + an N-terminal L-alpha-aminoacyl-[protein] = an N-terminal L-phenylalanyl-L-alpha-aminoacyl-[protein] + tRNA(Phe). Its function is as follows. Functions in the N-end rule pathway of protein degradation where it conjugates Leu, Phe and, less efficiently, Met from aminoacyl-tRNAs to the N-termini of proteins containing an N-terminal arginine or lysine. This Vibrio campbellii (strain ATCC BAA-1116) protein is Leucyl/phenylalanyl-tRNA--protein transferase.